A 197-amino-acid polypeptide reads, in one-letter code: Thymidylate kinase (197 aa).

7–14 is a binding site for ATP; the sequence is GIDGSGKS.

This sequence belongs to the thymidylate kinase family.

It carries out the reaction dTMP + ATP = dTDP + ADP. Its function is as follows. Phosphorylation of dTMP to form dTDP in both de novo and salvage pathways of dTTP synthesis. In Thermotoga sp. (strain RQ2), this protein is Thymidylate kinase.